The chain runs to 347 residues: Twinfilin-2 (347 aa).

ADF-H domains are found at residues 3 to 137 and 175 to 311; these read LVLV…RHIT and GLAF…DEVH. The interval 314–347 is disordered; it reads QHAHKQAFAKPRGPAGKRGNKRLIKGGGENGGNS. The segment covering 338–347 has biased composition (gly residues); that stretch reads KGGGENGGNS.

The protein belongs to the actin-binding proteins ADF family. Twinfilin subfamily. In terms of assembly, interacts with G-actin; ADP-actin form and capping protein (CP).

The protein localises to the cytoplasm. Its subcellular location is the cytoskeleton. The protein resides in the perinuclear region. Its function is as follows. Actin-binding protein involved in motile and morphological processes. Inhibits actin polymerization, likely by sequestering G-actin. The protein is Twinfilin-2 (twf2) of Danio rerio (Zebrafish).